The chain runs to 451 residues: Signal recognition particle 54 kDa protein (451 aa).

GTP is bound by residues 105-112, 187-191, and 247-250; these read GVQGTGKT, DTAGR, and TKMD.

It belongs to the GTP-binding SRP family. SRP54 subfamily. Part of the signal recognition particle protein translocation system, which is composed of SRP and FtsY. Archaeal SRP consists of a 7S RNA molecule of 300 nucleotides and two protein subunits: SRP54 and SRP19.

Its subcellular location is the cytoplasm. It catalyses the reaction GTP + H2O = GDP + phosphate + H(+). Involved in targeting and insertion of nascent membrane proteins into the cytoplasmic membrane. Binds to the hydrophobic signal sequence of the ribosome-nascent chain (RNC) as it emerges from the ribosomes. The SRP-RNC complex is then targeted to the cytoplasmic membrane where it interacts with the SRP receptor FtsY. The chain is Signal recognition particle 54 kDa protein from Acidianus ambivalens (Desulfurolobus ambivalens).